A 394-amino-acid chain; its full sequence is S-adenosylmethionine synthase 1 (394 aa).

Position 11 (Glu-11) interacts with Mg(2+). His-17 lines the ATP pocket. Residue Glu-45 coordinates K(+). Residues Glu-58 and Gln-101 each coordinate L-methionine. ATP-binding positions include 169-171, 237-240, Asp-248, 254-255, Ala-271, Lys-275, and Lys-279; these read DGK, SGRF, and RK. Residue Asp-248 participates in L-methionine binding. Lys-279 contacts L-methionine.

This sequence belongs to the AdoMet synthase family. As to quaternary structure, homotetramer. Mn(2+) is required as a cofactor. The cofactor is Mg(2+). Co(2+) serves as cofactor. Requires K(+) as cofactor.

The protein resides in the cytoplasm. The catalysed reaction is L-methionine + ATP + H2O = S-adenosyl-L-methionine + phosphate + diphosphate. The protein operates within amino-acid biosynthesis; S-adenosyl-L-methionine biosynthesis; S-adenosyl-L-methionine from L-methionine: step 1/1. Its function is as follows. Catalyzes the formation of S-adenosylmethionine from methionine and ATP. The reaction comprises two steps that are both catalyzed by the same enzyme: formation of S-adenosylmethionine (AdoMet) and triphosphate, and subsequent hydrolysis of the triphosphate. In Hordeum vulgare (Barley), this protein is S-adenosylmethionine synthase 1 (SAM1).